Here is a 232-residue protein sequence, read N- to C-terminus: 2-C-methyl-D-erythritol 4-phosphate cytidylyltransferase (232 aa).

This sequence belongs to the IspD/TarI cytidylyltransferase family. IspD subfamily.

The catalysed reaction is 2-C-methyl-D-erythritol 4-phosphate + CTP + H(+) = 4-CDP-2-C-methyl-D-erythritol + diphosphate. It functions in the pathway isoprenoid biosynthesis; isopentenyl diphosphate biosynthesis via DXP pathway; isopentenyl diphosphate from 1-deoxy-D-xylulose 5-phosphate: step 2/6. Its function is as follows. Catalyzes the formation of 4-diphosphocytidyl-2-C-methyl-D-erythritol from CTP and 2-C-methyl-D-erythritol 4-phosphate (MEP). In Shewanella frigidimarina (strain NCIMB 400), this protein is 2-C-methyl-D-erythritol 4-phosphate cytidylyltransferase.